The following is a 766-amino-acid chain: Isocitrate lyase 2 (766 aa).

Residue 106-108 coordinates substrate; the sequence is GGW. Residue Asp-177 participates in Mg(2+) binding. Cys-215 acts as the Proton acceptor in catalysis. Substrate contacts are provided by residues 216–217, Arg-252, 487–491, and Thr-522; these read GH and NLSPS.

The protein belongs to the isocitrate lyase/PEP mutase superfamily. Isocitrate lyase family. The cofactor is Mg(2+).

The catalysed reaction is D-threo-isocitrate = glyoxylate + succinate. Its pathway is carbohydrate metabolism; glyoxylate cycle; (S)-malate from isocitrate: step 1/2. Its function is as follows. Involved in the persistence and virulence of Mycobacterium. Catalyzes the reversible formation of succinate and glyoxylate from isocitrate, a key step of the glyoxylate cycle, which operates as an anaplerotic route for replenishing the tricarboxylic acid cycle during growth on fatty acid substrates. The chain is Isocitrate lyase 2 (aceA) from Mycobacterium bovis (strain ATCC BAA-935 / AF2122/97).